A 155-amino-acid polypeptide reads, in one-letter code: Small ribosomal subunit protein uS7c (155 aa).

It belongs to the universal ribosomal protein uS7 family. In terms of assembly, part of the 30S ribosomal subunit.

The protein resides in the plastid. It localises to the chloroplast. One of the primary rRNA binding proteins, it binds directly to 16S rRNA where it nucleates assembly of the head domain of the 30S subunit. In Stewartia pseudocamellia (Japanese stewartia), this protein is Small ribosomal subunit protein uS7c (rps7).